The sequence spans 556 residues: Phospholipase D (556 aa).

Residues 1–47 (MTSDQRPARLPTHKGKLLAPHRLHRLIPVSVALTTVCAALPSSTAYA) form the signal peptide. Residues 210 to 237 (SLSWNHSKLLVVDGKTAITGGINGWKDD) enclose the PLD phosphodiesterase 1 domain. Positions 326–360 (SDPSSGYHPDLPTAPDTKCTVGLHDNTNADRDYDT) are disordered. Positions 484–511 (KPYALHHKLVSVDDSAFYIGSKNLYPAW) constitute a PLD phosphodiesterase 2 domain.

The protein belongs to the phospholipase D family. Probably has at least 1 disulfide bond.

It is found in the secreted. It catalyses the reaction a 1,2-diacyl-sn-glycero-3-phosphocholine + H2O = a 1,2-diacyl-sn-glycero-3-phosphate + choline + H(+). Inhibited by mercaptoethanol and dithiothreitol. Its function is as follows. A reversible phospholipase active on phosphatidylcholine (PC) and phosphatidylethanolamine. Lysophosphatidylcholine and egg sphingomyelin are hydrolyzed about 50 times and 100 times more slowly than PC, respectively. During the transphosphatidylation reaction straight-chain hydroxy compounds, such as triethyleneglycol and triethyleneglycol monomethyl ether, were phosphatidylated in good yield, as were monosaccharides. Disaccharides and sugar alcohol reacted slowly, while N-acetyl-D-galactosamine, D-galactosamine and D-galacturonic acid were not phosphatidylated. The chain is Phospholipase D from Streptomyces antibioticus.